Reading from the N-terminus, the 590-residue chain is Major surface protein MspTL (590 aa).

An N-terminal signal peptide occupies residues Met1–Ala19.

The protein localises to the cell outer membrane. Functionally, major component of the outer membrane. This is Major surface protein MspTL (mspTL) from Treponema lecithinolyticum.